A 158-amino-acid chain; its full sequence is Disease resistance response protein Pi49 (158 aa).

It belongs to the BetVI family.

The chain is Disease resistance response protein Pi49 (DRR49A) from Pisum sativum (Garden pea).